Reading from the N-terminus, the 300-residue chain is Integrin-binding sialoprotein (300 aa).

Positions 41–258 are disordered; that stretch reads RFPVQSSSDS…YEQTGAHEYD (218 aa). 6 positions are modified to phosphoserine: Ser-46, Ser-51, Ser-59, Ser-60, Ser-82, and Ser-90. Residues 46 to 58 show a composition bias toward low complexity; the sequence is SSSDSSEENGNGD. Residues 59-92 show a composition bias toward acidic residues; it reads SSEEEEEEEENSNEEENNEENEDSDGNEDEDSEA. The span at 93-102 shows a compositional bias: polar residues; sequence ENITLSTTTL. N-linked (GlcNAc...) asparagine glycosylation is present at Asn-94. Residues 125 to 136 are compositionally biased toward basic and acidic residues; it reads KAGDIGKKSAKE. Over residues 137–160 the composition is skewed to acidic residues; the sequence is EESDEDEEEEEENEENEAEVDDNE. A Phosphoserine modification is found at Ser-139. Composition is skewed to polar residues over residues 161–173, 193–202, and 229–243; these read QGTN…STEV, VTEAQGTTVA, and ISGT…TTTP. Asn-164 and Asn-169 each carry an N-linked (GlcNAc...) asparagine glycan. At Ser-266 the chain carries Phosphoserine. The Integrin-binding motif signature appears at 272–274; sequence RGD. Residue Ser-293 is modified to Phosphoserine. A sulfotyrosine mark is found at Tyr-299 and Tyr-300.

Monomer. Interacts with integrins; the interaction promotes cell adhesion.

The protein resides in the secreted. Functionally, binds tightly to hydroxyapatite. Appears to form an integral part of the mineralized matrix. Probably important to cell-matrix interaction. Promotes adhesion and migration of various cells via the alpha-V/beta-3 integrin receptor (ITGAV:ITGB3). The sequence is that of Integrin-binding sialoprotein (IBSP) from Sus scrofa (Pig).